The chain runs to 158 residues: Cyclic pyranopterin monophosphate synthase (158 aa).

Substrate contacts are provided by residues leucine 75 to histidine 77 and methionine 113 to glutamate 114. Aspartate 128 is a catalytic residue.

Belongs to the MoaC family. In terms of assembly, homohexamer; trimer of dimers.

It catalyses the reaction (8S)-3',8-cyclo-7,8-dihydroguanosine 5'-triphosphate = cyclic pyranopterin phosphate + diphosphate. It participates in cofactor biosynthesis; molybdopterin biosynthesis. In terms of biological role, catalyzes the conversion of (8S)-3',8-cyclo-7,8-dihydroguanosine 5'-triphosphate to cyclic pyranopterin monophosphate (cPMP). The polypeptide is Cyclic pyranopterin monophosphate synthase (Ralstonia nicotianae (strain ATCC BAA-1114 / GMI1000) (Ralstonia solanacearum)).